The chain runs to 94 residues: ESAT-6-like protein EsxI (94 aa).

This sequence belongs to the WXG100 family. ESAT-6 subfamily.

It is found in the secreted. This chain is ESAT-6-like protein EsxI, found in Mycobacterium bovis (strain ATCC BAA-935 / AF2122/97).